We begin with the raw amino-acid sequence, 359 residues long: Phospho-N-acetylmuramoyl-pentapeptide-transferase (359 aa).

The next 10 helical transmembrane spans lie at 3–23, 55–75, 84–104, 117–137, 156–176, 190–210, 231–251, 255–275, 283–303, and 330–350; these read QILIAVAIAVAVSILLTPVLI, VAIVAGIWASYFGTHLVGVVI, GLLVLGLATALGAVGFLDDLI, TAKTVGILVAAVLFGVLALQF, IATVTLAPAVFVLFCVVVVSA, LAAGAMAMVCAAYVLITFWQF, LAIIAAATAGACIGFLWWNAA, IFMGDTGSLALGGIIAGLSVT, VVLGALFVAEVTSVVVQILAF, and VIIRFWLLTAIACGLGVALFY.

This sequence belongs to the glycosyltransferase 4 family. MraY subfamily. Mg(2+) serves as cofactor.

The protein resides in the cell membrane. The catalysed reaction is UDP-N-acetyl-alpha-D-muramoyl-L-alanyl-gamma-D-glutamyl-meso-2,6-diaminopimeloyl-D-alanyl-D-alanine + di-trans,octa-cis-undecaprenyl phosphate = di-trans,octa-cis-undecaprenyl diphospho-N-acetyl-alpha-D-muramoyl-L-alanyl-D-glutamyl-meso-2,6-diaminopimeloyl-D-alanyl-D-alanine + UMP. Its pathway is cell wall biogenesis; peptidoglycan biosynthesis. Its function is as follows. Catalyzes the initial step of the lipid cycle reactions in the biosynthesis of the cell wall peptidoglycan: transfers peptidoglycan precursor phospho-MurNAc-pentapeptide from UDP-MurNAc-pentapeptide onto the lipid carrier undecaprenyl phosphate, yielding undecaprenyl-pyrophosphoryl-MurNAc-pentapeptide, known as lipid I. This is Phospho-N-acetylmuramoyl-pentapeptide-transferase from Mycolicibacterium vanbaalenii (strain DSM 7251 / JCM 13017 / BCRC 16820 / KCTC 9966 / NRRL B-24157 / PYR-1) (Mycobacterium vanbaalenii).